The chain runs to 228 residues: ATP phosphoribosyltransferase (228 aa).

The protein belongs to the ATP phosphoribosyltransferase family. Short subfamily. Heteromultimer composed of HisG and HisZ subunits.

The protein localises to the cytoplasm. It carries out the reaction 1-(5-phospho-beta-D-ribosyl)-ATP + diphosphate = 5-phospho-alpha-D-ribose 1-diphosphate + ATP. Its pathway is amino-acid biosynthesis; L-histidine biosynthesis; L-histidine from 5-phospho-alpha-D-ribose 1-diphosphate: step 1/9. Its function is as follows. Catalyzes the condensation of ATP and 5-phosphoribose 1-diphosphate to form N'-(5'-phosphoribosyl)-ATP (PR-ATP). Has a crucial role in the pathway because the rate of histidine biosynthesis seems to be controlled primarily by regulation of HisG enzymatic activity. In Acinetobacter baylyi (strain ATCC 33305 / BD413 / ADP1), this protein is ATP phosphoribosyltransferase.